The chain runs to 222 residues: Peptide methionine sulfoxide reductase MsrA (222 aa).

Cys-60 is an active-site residue.

This sequence belongs to the MsrA Met sulfoxide reductase family.

The enzyme catalyses L-methionyl-[protein] + [thioredoxin]-disulfide + H2O = L-methionyl-(S)-S-oxide-[protein] + [thioredoxin]-dithiol. It carries out the reaction [thioredoxin]-disulfide + L-methionine + H2O = L-methionine (S)-S-oxide + [thioredoxin]-dithiol. In terms of biological role, has an important function as a repair enzyme for proteins that have been inactivated by oxidation. Catalyzes the reversible oxidation-reduction of methionine sulfoxide in proteins to methionine. This is Peptide methionine sulfoxide reductase MsrA from Pseudomonas putida (strain W619).